The chain runs to 583 residues: Protein cps3 (583 aa).

C3H1-type zinc fingers lie at residues serine 35–glutamate 62 and alanine 64–proline 91. Disordered regions lie at residues leucine 318 to threonine 346, lysine 471 to threonine 490, and arginine 504 to glycine 532. Composition is skewed to polar residues over residues lysine 323–asparagine 334, asparagine 475–threonine 490, and proline 513–glycine 532.

The protein resides in the cytoplasm. Its function is as follows. Responsible for supersensitivity to the spindle poison, isopropyl N-3-chlorophenyl carbamate. Has a role in meiosis. This chain is Protein cps3 (cps3), found in Schizosaccharomyces pombe (strain 972 / ATCC 24843) (Fission yeast).